The primary structure comprises 97 residues: uncharacterized protein (97 aa).

This is an uncharacterized protein from Escherichia coli (strain K12).